A 542-amino-acid chain; its full sequence is Ribonuclease Y (542 aa).

The helical transmembrane segment at Met-1–Ala-21 threads the bilayer. The tract at residues Ser-52–Ala-92 is disordered. Residues Ala-59–Ala-92 are compositionally biased toward basic and acidic residues. The KH domain occupies Val-229–Leu-289. The 95-residue stretch at Val-355 to Ala-449 folds into the HD domain.

Belongs to the RNase Y family.

The protein localises to the cell membrane. Its function is as follows. Endoribonuclease that initiates mRNA decay. The polypeptide is Ribonuclease Y (Cutibacterium acnes (strain DSM 16379 / KPA171202) (Propionibacterium acnes)).